An 821-amino-acid chain; its full sequence is Glycerol-3-phosphate acyltransferase (821 aa).

The HXXXXD motif signature appears at 310–315; sequence CHRSHM.

It belongs to the GPAT/DAPAT family.

The protein localises to the cell membrane. It catalyses the reaction sn-glycerol 3-phosphate + an acyl-CoA = a 1-acyl-sn-glycero-3-phosphate + CoA. It functions in the pathway phospholipid metabolism; CDP-diacylglycerol biosynthesis; CDP-diacylglycerol from sn-glycerol 3-phosphate: step 1/3. The protein is Glycerol-3-phosphate acyltransferase of Baumannia cicadellinicola subsp. Homalodisca coagulata.